Consider the following 327-residue polypeptide: Methionyl-tRNA formyltransferase (327 aa).

117 to 120 contributes to the (6S)-5,6,7,8-tetrahydrofolate binding site; it reads SLLP.

The protein belongs to the Fmt family.

It catalyses the reaction L-methionyl-tRNA(fMet) + (6R)-10-formyltetrahydrofolate = N-formyl-L-methionyl-tRNA(fMet) + (6S)-5,6,7,8-tetrahydrofolate + H(+). In terms of biological role, attaches a formyl group to the free amino group of methionyl-tRNA(fMet). The formyl group appears to play a dual role in the initiator identity of N-formylmethionyl-tRNA by promoting its recognition by IF2 and preventing the misappropriation of this tRNA by the elongation apparatus. The chain is Methionyl-tRNA formyltransferase from Delftia acidovorans (strain DSM 14801 / SPH-1).